The sequence spans 322 residues: HPr kinase/phosphorylase (322 aa).

Residues His-153 and Lys-174 contribute to the active site. 168-175 lines the ATP pocket; the sequence is GRSGLGKS. Ser-175 lines the Mg(2+) pocket. Asp-192 functions as the Proton acceptor; for phosphorylation activity. Proton donor; for dephosphorylation activity in the catalytic mechanism. Positions 217 to 226 are important for the catalytic mechanism of both phosphorylation and dephosphorylation; sequence MEIRGLGVVD. Glu-218 contacts Mg(2+). Arg-259 is an active-site residue. Positions 280-285 are important for the catalytic mechanism of dephosphorylation; sequence PIFPGK.

Belongs to the HPrK/P family. In terms of assembly, homohexamer. The cofactor is Mg(2+).

It carries out the reaction [HPr protein]-L-serine + ATP = [HPr protein]-O-phospho-L-serine + ADP + H(+). It catalyses the reaction [HPr protein]-O-phospho-L-serine + phosphate + H(+) = [HPr protein]-L-serine + diphosphate. Its function is as follows. Catalyzes the ATP- as well as the pyrophosphate-dependent phosphorylation of a specific serine residue in HPr, a phosphocarrier protein of the phosphoenolpyruvate-dependent sugar phosphotransferase system (PTS). HprK/P also catalyzes the pyrophosphate-producing, inorganic phosphate-dependent dephosphorylation (phosphorolysis) of seryl-phosphorylated HPr (P-Ser-HPr). In Chlorobium phaeobacteroides (strain DSM 266 / SMG 266 / 2430), this protein is HPr kinase/phosphorylase.